The following is a 294-amino-acid chain: Hydroxyethylthiazole kinase (294 aa).

Residue methionine 57 coordinates substrate. Arginine 132 and serine 196 together coordinate ATP. Glycine 223 serves as a coordination point for substrate.

The protein belongs to the Thz kinase family. Mg(2+) is required as a cofactor.

It carries out the reaction 5-(2-hydroxyethyl)-4-methylthiazole + ATP = 4-methyl-5-(2-phosphooxyethyl)-thiazole + ADP + H(+). Its pathway is cofactor biosynthesis; thiamine diphosphate biosynthesis; 4-methyl-5-(2-phosphoethyl)-thiazole from 5-(2-hydroxyethyl)-4-methylthiazole: step 1/1. Catalyzes the phosphorylation of the hydroxyl group of 4-methyl-5-beta-hydroxyethylthiazole (THZ). The sequence is that of Hydroxyethylthiazole kinase from Bifidobacterium adolescentis (strain ATCC 15703 / DSM 20083 / NCTC 11814 / E194a).